Reading from the N-terminus, the 359-residue chain is Magnesium transporter NIPA2 (359 aa).

Topologically, residues 1-9 (MSLGRGKYD) are extracellular. Residues 10-30 (FYIGLGLAMTSSIFIGGSFIL) form a helical membrane-spanning segment. At 31 to 56 (KKKGLLRLARKGSMRAGQGGHAYLKE) the chain is on the cytoplasmic side. The helical transmembrane segment at 57–77 (WLWWAGLLSMGAGEVANFAAY) threads the bilayer. Position 78 (Ala-78) is a topological domain, extracellular. A helical transmembrane segment spans residues 79–99 (FAPATLVTPLGALSVLVSAIL). Residues 100-107 (SSYFLNER) are Cytoplasmic-facing. Residues 108 to 128 (LNLHGKIGCLLSILGSTVMVI) form a helical membrane-spanning segment. Residues 129–149 (HAPKEEEIETLNEMSHKLGDP) are Extracellular-facing. The helical transmembrane segment at 150-170 (GFVVFATFVVIVALIFIFVVG) threads the bilayer. The Cytoplasmic segment spans residues 171–175 (PRHGQ). A helical transmembrane segment spans residues 176–196 (TNILVYITICSVIGAFSVSCV). Residues 197–215 (KGLGIAIKELLAGKPVLQH) lie on the Extracellular side of the membrane. The helical transmembrane segment at 216–236 (PLAWILLFSLVVCVSTQINYL) threads the bilayer. Residues 237–246 (NRALDIFNTS) are Cytoplasmic-facing. The helical transmembrane segment at 247-267 (IVTPIYYVFFTTSVLTCSAIL) threads the bilayer. The Extracellular segment spans residues 268-278 (FKEWQDMPVDD). The chain crosses the membrane as a helical span at residues 279-299 (VIGTLSGFFTIIVGIFLLHAF). Topologically, residues 300–359 (KDVSFSLASLPVSFRKDEKAMNGNLSSMYEVLNNNEDDLPCGIEHTGENISRRNGNLPSF) are cytoplasmic.

Belongs to the NIPA family. In terms of tissue distribution, widely expressed. Expressed at high levels in the kidney.

The protein resides in the cell membrane. Its subcellular location is the early endosome. It carries out the reaction Mg(2+)(in) = Mg(2+)(out). Functionally, acts as a selective Mg(2+) transporter. This Mus musculus (Mouse) protein is Magnesium transporter NIPA2 (Nipa2).